The chain runs to 120 residues: MRLLAQLLGLLMLWVPGSSGDIVMTQTPLSSPVTLGQPASISFRSSQSLVHSDGNTYLSWLQQRPGQPPRLLIYKVSNRFSGVPDRFSGSGAGTDFTLKISRVEAEDVGVYYCTQATQFP.

A signal peptide spans 1–19 (MRLLAQLLGLLMLWVPGSS). The 101-residue stretch at 20–120 (GDIVMTQTPL…YYCTQATQFP (101 aa)) folds into the Ig-like domain. The framework-1 stretch occupies residues 21-43 (DIVMTQTPLSSPVTLGQPASISF). The interval 44 to 59 (RSSQSLVHSDGNTYLS) is complementarity-determining-1. The interval 60-74 (WLQQRPGQPPRLLIY) is framework-2. The interval 75 to 81 (KVSNRFS) is complementarity-determining-2. A framework-3 region spans residues 82–113 (GVPDRFSGSGAGTDFTLKISRVEAEDVGVYYC). A complementarity-determining-3 region spans residues 114 to 120 (TQATQFP).

Most probably, the immunoglobulin is not assembled due to incorrect folding of light chain. Immunoglobulins are composed of two identical heavy chains and two identical light chains; disulfide-linked.

The protein resides in the secreted. It is found in the cell membrane. Probable non-functional open reading frame (ORF) of V region of the variable domain of immunoglobulin light chains. Non-functional ORF generally cannot participate in the synthesis of a productive immunoglobulin chain due to altered V-(D)-J or switch recombination and/or splicing site (at mRNA level) and/or conserved amino acid change (protein level). Immunoglobulins, also known as antibodies, are membrane-bound or secreted glycoproteins produced by B lymphocytes. In the recognition phase of humoral immunity, the membrane-bound immunoglobulins serve as receptors which, upon binding of a specific antigen, trigger the clonal expansion and differentiation of B lymphocytes into immunoglobulins-secreting plasma cells. Secreted immunoglobulins mediate the effector phase of humoral immunity, which results in the elimination of bound antigens. The antigen binding site is formed by the variable domain of one heavy chain, together with that of its associated light chain. Thus, each immunoglobulin has two antigen binding sites with remarkable affinity for a particular antigen. The variable domains are assembled by a process called V-(D)-J rearrangement and can then be subjected to somatic hypermutations which, after exposure to antigen and selection, allow affinity maturation for a particular antigen. The chain is Probable non-functional immunoglobulin kappa variable 2D-24 from Homo sapiens (Human).